A 412-amino-acid polypeptide reads, in one-letter code: MPQQNYLDELTPAFTPLLAIKEASRCLLCHDAPCSQACPAQTDPGKFIRSIYFRNFKGAAETIRENNALGAVCARVCPTEKLCQSGCTRAGVDAPIDIGRLQRFVTDFEQQTGMEIYQPGTKTLGKVAIIGAGPAGLQASVTLTNQGYDVTIYEKEAHPGGWLRNGIPQFRLPQSVLDAEIARIEKMGVTIKCNNEIGKTLTLEQLKAENRAVLVTVGLSSGSGLPLFEHSDVEIAVDFLLRARQAQGDISIPQSALIIGGGDVAMDVASTLKVLGCQAVTCVAREELDEFPASEKEFASARELGVSIIDGFTPVAVEGNKVTFKHVRLSGELTMAADKIILAVGQHARLDDFAKLEPQRNTIKTQNYQTRDPQVFAAGDIVEGDKTVVYAVKTGKEAAEAIHHYLEGACSC.

Glu286 lines the NAD(+) pocket.

This sequence belongs to the NADH dehydrogenase family. As to quaternary structure, heterotetramer of 2 PreA and 2 PreT subunits.

It carries out the reaction 5,6-dihydrouracil + NAD(+) = uracil + NADH + H(+). The catalysed reaction is 5,6-dihydrothymine + NAD(+) = thymine + NADH + H(+). In terms of biological role, involved in pyrimidine base degradation. Catalyzes physiologically the reduction of uracil to 5,6-dihydrouracil (DHU) by using NADH as a specific cosubstrate. It also catalyzes the reverse reaction and the reduction of thymine to 5,6-dihydrothymine (DHT). The protein is NAD-dependent dihydropyrimidine dehydrogenase subunit PreT (preT) of Escherichia coli O157:H7.